Here is a 299-residue protein sequence, read N- to C-terminus: Zinc-alpha-2-glycoprotein (299 aa).

The signal sequence occupies residues 1-17; the sequence is MVPVLLALLLLLGPAVS. Residues asparagine 24, asparagine 125, and asparagine 256 are each glycosylated (N-linked (GlcNAc...) asparagine). 2 disulfides stabilise this stretch: cysteine 120-cysteine 183 and cysteine 222-cysteine 277. The Ig-like C1-type domain occupies 204–289; the sequence is PSVSVTGHAA…EHRSLTRPLT (86 aa).

This sequence belongs to the MHC class I family. As to quaternary structure, interacts with PIP.

Its subcellular location is the secreted. Stimulates lipid degradation in adipocytes and causes the extensive fat losses associated with some advanced cancers. This is Zinc-alpha-2-glycoprotein (AZGP1) from Bos taurus (Bovine).